The following is a 55-amino-acid chain: Large ribosomal subunit protein bL33 (55 aa).

It belongs to the bacterial ribosomal protein bL33 family.

This Wigglesworthia glossinidia brevipalpis protein is Large ribosomal subunit protein bL33.